The chain runs to 343 residues: Heat-inducible transcription repressor HrcA (343 aa).

It belongs to the HrcA family.

Functionally, negative regulator of class I heat shock genes (grpE-dnaK-dnaJ and groELS operons). Prevents heat-shock induction of these operons. This Thermobifida fusca (strain YX) protein is Heat-inducible transcription repressor HrcA.